A 260-amino-acid chain; its full sequence is Manganese transport system ATP-binding protein MntA (260 aa).

One can recognise an ABC transporter domain in the interval 10–245 (ISVDGVSVTY…NLELTFGGLP (236 aa)). ATP is bound at residue 43–50 (GPNGSGKS).

It belongs to the ABC transporter superfamily.

Its function is as follows. Part of an ATP-driven transport system for manganese. This is Manganese transport system ATP-binding protein MntA (mntA) from Synechocystis sp. (strain ATCC 27184 / PCC 6803 / Kazusa).